The chain runs to 296 residues: 33 kDa chaperonin (296 aa).

2 cysteine pairs are disulfide-bonded: C236-C238 and C269-C272.

The protein belongs to the HSP33 family. Post-translationally, under oxidizing conditions two disulfide bonds are formed involving the reactive cysteines. Under reducing conditions zinc is bound to the reactive cysteines and the protein is inactive.

Its subcellular location is the cytoplasm. Redox regulated molecular chaperone. Protects both thermally unfolding and oxidatively damaged proteins from irreversible aggregation. Plays an important role in the bacterial defense system toward oxidative stress. This Lactobacillus acidophilus (strain ATCC 700396 / NCK56 / N2 / NCFM) protein is 33 kDa chaperonin.